The sequence spans 257 residues: Protein patched homolog 1 (257 aa).

At 1–199 (AKLQTGTAYL…LDDILKSFSD (199 aa)) the chain is on the extracellular side. N-linked (GlcNAc...) asparagine glycosylation is found at asparagine 75, asparagine 114, and asparagine 177. A helical transmembrane segment spans residues 200-220 (ISVIRVASGYLLMLAYACLTM). The SSD domain occupies 201–257 (SVIRVASGYLLMLAYACLTMLRWDCAKSQGAVGLAGVLLVALSVAAGLGLCSLIGIS). Topologically, residues 221 to 235 (LRWDCAKSQGAVGLA) are cytoplasmic. Residues 236-256 (GVLLVALSVAAGLGLCSLIGI) traverse the membrane as a helical segment.

It belongs to the patched family. Glycosylation is necessary for SHH binding. As to expression, in the eye, detected in neural retina, iris, retinal pigment epithelium, but not in lens.

It localises to the membrane. In terms of biological role, acts as a receptor for sonic hedgehog (SHH), indian hedgehog (IHH) and desert hedgehog (DHH). Associates with the smoothened protein (SMO) to transduce the hedgehog's proteins signal. This is Protein patched homolog 1 (PTC1) from Cynops pyrrhogaster (Japanese fire-bellied newt).